A 338-amino-acid chain; its full sequence is Nickel transporter NixA (338 aa).

A run of 8 helical transmembrane segments spans residues 11–31 (WLPY…FLWI), 37–57 (HILF…AFDA), 79–99 (GVGF…AVFL), 127–147 (FFLV…INLF), 187–207 (VLPL…IALL), 217–237 (AISF…MSLL), 266–286 (ITAI…LQIL), and 307–327 (YLGY…SLIW).

It belongs to the NiCoT transporter (TC 2.A.52) family.

It localises to the cell membrane. Its function is as follows. Secondary nickel transporter. Required for full urease activity. The protein is Nickel transporter NixA of Staphylococcus aureus (strain NCTC 8325 / PS 47).